The following is a 517-amino-acid chain: Pentatricopeptide repeat-containing protein At5g42450, mitochondrial (517 aa).

The N-terminal 23 residues, 1-23, are a transit peptide targeting the mitochondrion; it reads MLHMILSQRVILLRKYHSSANAL. 9 PPR repeats span residues 57–91, 92–126, 127–157, 158–188, 189–223, 225–259, 261–291, 294–329, and 368–398; these read DVISATAVIGRFVKESRHVEASQAFKRLLCLGIRP, NEFTFGTVIGSSTTSRDVKLGKQLHCYALKMGLAS, NVFVGSAVLNCYVKLSTLTDARRCFDDTRDP, NVVSITNLISGYLKKHEFEEALSLFRAMPER, SVVTWNAVIGGFSQTGRNEEAVNTFVDMLREGVVI, NESTFPCAITAISNIASHGAGKSIHACAIKFLGKR, NVFVWNSLISFYSKCGNMEDSLLAFNKLEEE, NIVSWNSMIWGYAHNGRGEEAVAMFEKMVKDTNLRP, and ELEHYACMVDMLSRSGRFKEAEELIKSMPLD. The tract at residues 403-478 is type E motif; sequence FWKALLGGCQ…FTGCSWIEVR (76 aa). The segment at 479-509 is type E(+) motif; the sequence is DQIRVFVNADKNNELKDEVYRMLALVSQHLE.

Belongs to the PPR family. PCMP-E subfamily.

The protein resides in the mitochondrion. The chain is Pentatricopeptide repeat-containing protein At5g42450, mitochondrial (PCMP-E102) from Arabidopsis thaliana (Mouse-ear cress).